Consider the following 635-residue polypeptide: Glutamyl-tRNA(Gln) amidotransferase subunit E (635 aa).

Residues 415-437 (LPDGNTEYMRPLPGKARMYPETD) form a disordered region.

Belongs to the GatB/GatE family. GatE subfamily. Heterodimer of GatD and GatE.

It catalyses the reaction L-glutamyl-tRNA(Gln) + L-glutamine + ATP + H2O = L-glutaminyl-tRNA(Gln) + L-glutamate + ADP + phosphate + H(+). Functionally, allows the formation of correctly charged Gln-tRNA(Gln) through the transamidation of misacylated Glu-tRNA(Gln) in organisms which lack glutaminyl-tRNA synthetase. The reaction takes place in the presence of glutamine and ATP through an activated gamma-phospho-Glu-tRNA(Gln). The GatDE system is specific for glutamate and does not act on aspartate. This Pyrococcus horikoshii (strain ATCC 700860 / DSM 12428 / JCM 9974 / NBRC 100139 / OT-3) protein is Glutamyl-tRNA(Gln) amidotransferase subunit E.